Here is a 236-residue protein sequence, read N- to C-terminus: LexA repressor (236 aa).

The disordered stretch occupies residues 1–25; it reads MNDSNDTSVAGGAAGADSRVLSADS. Residues 51 to 71 constitute a DNA-binding region (H-T-H motif); that stretch reads IREIGDAVGLTSTSSVAHQLR. Residues serine 160 and lysine 197 each act as for autocatalytic cleavage activity in the active site.

The protein belongs to the peptidase S24 family. As to quaternary structure, homodimer.

It catalyses the reaction Hydrolysis of Ala-|-Gly bond in repressor LexA.. Represses a number of genes involved in the response to DNA damage (SOS response), including recA and lexA. In the presence of single-stranded DNA, RecA interacts with LexA causing an autocatalytic cleavage which disrupts the DNA-binding part of LexA, leading to derepression of the SOS regulon and eventually DNA repair. The sequence is that of LexA repressor from Mycobacterium bovis (strain BCG / Pasteur 1173P2).